A 503-amino-acid polypeptide reads, in one-letter code: Probable cytosol aminopeptidase (503 aa).

The Mn(2+) site is built by K270 and D275. Residue K282 is part of the active site. Positions 293, 352, and 354 each coordinate Mn(2+). R356 is an active-site residue.

It belongs to the peptidase M17 family. It depends on Mn(2+) as a cofactor.

It localises to the cytoplasm. It catalyses the reaction Release of an N-terminal amino acid, Xaa-|-Yaa-, in which Xaa is preferably Leu, but may be other amino acids including Pro although not Arg or Lys, and Yaa may be Pro. Amino acid amides and methyl esters are also readily hydrolyzed, but rates on arylamides are exceedingly low.. It carries out the reaction Release of an N-terminal amino acid, preferentially leucine, but not glutamic or aspartic acids.. In terms of biological role, presumably involved in the processing and regular turnover of intracellular proteins. Catalyzes the removal of unsubstituted N-terminal amino acids from various peptides. The sequence is that of Probable cytosol aminopeptidase from Klebsiella pneumoniae subsp. pneumoniae (strain ATCC 700721 / MGH 78578).